A 476-amino-acid chain; its full sequence is Cysteine--tRNA ligase (476 aa).

Cys-28 is a Zn(2+) binding site. Residues 30-40 (PTVYDNTHLGH) carry the 'HIGH' region motif. Residues Cys-208, His-233, and Glu-237 each contribute to the Zn(2+) site. Residues 265–269 (KMSKS) carry the 'KMSKS' region motif. An ATP-binding site is contributed by Lys-268.

This sequence belongs to the class-I aminoacyl-tRNA synthetase family. It depends on Zn(2+) as a cofactor.

The protein localises to the cytoplasm. The enzyme catalyses tRNA(Cys) + L-cysteine + ATP = L-cysteinyl-tRNA(Cys) + AMP + diphosphate. The polypeptide is Cysteine--tRNA ligase (Methanococcus maripaludis (strain DSM 14266 / JCM 13030 / NBRC 101832 / S2 / LL)).